A 211-amino-acid chain; its full sequence is Ribosomal RNA small subunit methyltransferase G (211 aa).

Residues Gly73, Ile126 to Glu127, and Arg142 contribute to the S-adenosyl-L-methionine site.

Belongs to the methyltransferase superfamily. RNA methyltransferase RsmG family.

It localises to the cytoplasm. The catalysed reaction is guanosine(527) in 16S rRNA + S-adenosyl-L-methionine = N(7)-methylguanosine(527) in 16S rRNA + S-adenosyl-L-homocysteine. Its function is as follows. Specifically methylates the N7 position of guanine in position 527 of 16S rRNA. The sequence is that of Ribosomal RNA small subunit methyltransferase G from Methylorubrum extorquens (strain PA1) (Methylobacterium extorquens).